A 231-amino-acid polypeptide reads, in one-letter code: Cysteine-rich venom protein VAR10 (231 aa).

Positions 1 to 19 (MILLKLYLTLAAILCQSRG) are cleaved as a signal peptide. In terms of domain architecture, SCP spans 41–169 (NKHNDLRRTV…SLKYFQVCQY (129 aa)). 5 cysteine pairs are disulfide-bonded: Cys77–Cys156, Cys95–Cys170, Cys151–Cys167, Cys189–Cys196, and Cys214–Cys231. One can recognise a ShKT domain in the interval 205-231 (CAYNDDYTSCPDLTKQVGCHHPVTANC).

The protein belongs to the CRISP family. In terms of processing, contains 8 disulfide bonds. As to expression, expressed by the venom gland.

It localises to the secreted. Blocks ryanodine receptors, and potassium channels. The sequence is that of Cysteine-rich venom protein VAR10 from Varanus varius (Lace monitor lizard).